The chain runs to 459 residues: Vanillin aminotransferase (459 aa).

Residues 115–116 and D255 contribute to the pyridoxal 5'-phosphate site; that span reads GS. K284 carries the N6-(pyridoxal phosphate)lysine modification. Residue 320-321 participates in pyridoxal 5'-phosphate binding; it reads FT. Positions 428–459 form a coiled coil; that stretch reads LSLEELDELIRIYGKALKDTEKRVEELKSQKK.

Belongs to the class-III pyridoxal-phosphate-dependent aminotransferase family. In terms of tissue distribution, expressed in placental tissue of immature fruit.

The catalysed reaction is vanillin + L-alanine = vanillylamine + pyruvate. It participates in aromatic compound metabolism; phenylpropanoid biosynthesis. Its function is as follows. Involved in the biosynthesis of capsaicinoids natural products, pungent alkaloids synthesized from phenylpropanoid intermediates in the placental tissue of chili pepper fruit acting as repellant on herbivorous mammals and conferring spiciness to hot peppers. Can transfer an amine from vanillylamine to pyruvate forming vanillin and L-alanine. Can use pyruvate or oxaloacetate, but not 2-oxoglutarate as amino group acceptors. Is able to convert (S)-1-phenylethylamine into acetophenone in vitro. The sequence is that of Vanillin aminotransferase from Capsicum chinense (Scotch bonnet).